The sequence spans 247 residues: 5-oxoprolinase subunit A 1 (247 aa).

This sequence belongs to the LamB/PxpA family. Forms a complex composed of PxpA, PxpB and PxpC.

It catalyses the reaction 5-oxo-L-proline + ATP + 2 H2O = L-glutamate + ADP + phosphate + H(+). Functionally, catalyzes the cleavage of 5-oxoproline to form L-glutamate coupled to the hydrolysis of ATP to ADP and inorganic phosphate. The sequence is that of 5-oxoprolinase subunit A 1 from Ralstonia nicotianae (strain ATCC BAA-1114 / GMI1000) (Ralstonia solanacearum).